Reading from the N-terminus, the 236-residue chain is 5'-methylthioadenosine/S-adenosylhomocysteine nucleosidase (236 aa).

E12 (proton acceptor) is an active-site residue. Substrate contacts are provided by residues G78, I153, and 174–175; that span reads ME. D198 functions as the Proton donor in the catalytic mechanism.

This sequence belongs to the PNP/UDP phosphorylase family. MtnN subfamily.

The enzyme catalyses S-adenosyl-L-homocysteine + H2O = S-(5-deoxy-D-ribos-5-yl)-L-homocysteine + adenine. The catalysed reaction is S-methyl-5'-thioadenosine + H2O = 5-(methylsulfanyl)-D-ribose + adenine. It catalyses the reaction 5'-deoxyadenosine + H2O = 5-deoxy-D-ribose + adenine. It participates in amino-acid biosynthesis; L-methionine biosynthesis via salvage pathway; S-methyl-5-thio-alpha-D-ribose 1-phosphate from S-methyl-5'-thioadenosine (hydrolase route): step 1/2. Functionally, catalyzes the irreversible cleavage of the glycosidic bond in both 5'-methylthioadenosine (MTA) and S-adenosylhomocysteine (SAH/AdoHcy) to adenine and the corresponding thioribose, 5'-methylthioribose and S-ribosylhomocysteine, respectively. Also cleaves 5'-deoxyadenosine, a toxic by-product of radical S-adenosylmethionine (SAM) enzymes, into 5-deoxyribose and adenine. This chain is 5'-methylthioadenosine/S-adenosylhomocysteine nucleosidase, found in Shewanella baltica (strain OS155 / ATCC BAA-1091).